The chain runs to 143 residues: Large-conductance mechanosensitive channel (143 aa).

A run of 2 helical transmembrane segments spans residues 19 to 39 and 81 to 101; these read VGVI…ADVI and GSFL…FLVV.

It belongs to the MscL family. Homopentamer.

The protein localises to the cell inner membrane. Functionally, channel that opens in response to stretch forces in the membrane lipid bilayer. May participate in the regulation of osmotic pressure changes within the cell. This Rhodopseudomonas palustris (strain HaA2) protein is Large-conductance mechanosensitive channel.